The sequence spans 596 residues: Cytochrome P450 monooxygenase FUM15 (596 aa).

The disordered stretch occupies residues 476–512 (DRWLSPKNGNREATEQSKFKIGNQKRDSTAAPEVTQE). The segment covering 484 to 503 (GNREATEQSKFKIGNQKRDS) has biased composition (basic and acidic residues). A heme-binding site is contributed by Cys536.

Belongs to the cytochrome P450 family. The cofactor is heme.

It is found in the endoplasmic reticulum. It participates in secondary metabolite biosynthesis. Cytochrome P450 monooxygenase; part of the gene cluster that mediates the biosynthesis of fumonisins B1 (FB1), B2 (FB2), B3 (FB3), and B4 (FB4), which are carcinogenic mycotoxins. Within the pathway, FUM15 may be responsible for the hydroxylations at positions C-14 and/or C-15. Also plays a role in self-protection from FB1 toxicity, probably through derivatization of FB1, and may contribute to ceramide biosynthesis. The biosynthesis starts with the FUM1-catalyzed carbon chain assembly from one molecule of acetyl-CoA, eight molecules of malonyl-CoA, and two molecules of methionine (in S-adenosyl form). The C18 polyketide chain is released from the enzyme by a nucleophilic attack of a carbanion, which is derived from R-carbon of alanine by decarboxylation, on the carbonyl carbon of polyketide acyl chain. This step is catalyzed by the pyridoxal 5'-phosphate-dependent aminoacyl transferase FUM8. The resultant 3-keto intermediate is then stereospecifically reduced to a 3-hydroxyl product by reductase FUM13. Subsequent oxidations at C-10 by the cytochrome P450 monooxygenase FUM2, C-14 and C-15 by FUM6, FUM12 or FUM15, tricarballylic esterification of the hydroxyl groups on C-14 and C-15 by acyltransferase FUM14, and C-5 hydroxylation by 2-keto-glutarate-dependent dioxygenase FUM3 furnish the biosynthesis of fumonisins. The tricarballylic moieties are most likely derived from the citric acid cycle, and their addition to the carbon backbone may involve FUM7, FUM10, FUM11 and FUM14. The sequence is that of Cytochrome P450 monooxygenase FUM15 from Gibberella moniliformis (strain M3125 / FGSC 7600) (Maize ear and stalk rot fungus).